Here is a 1468-residue protein sequence, read N- to C-terminus: DNA-directed RNA polymerase subunit beta (1468 aa).

This sequence belongs to the RNA polymerase beta chain family. The RNAP catalytic core consists of 2 alpha, 1 beta, 1 beta' and 1 omega subunit. When a sigma factor is associated with the core the holoenzyme is formed, which can initiate transcription.

It catalyses the reaction RNA(n) + a ribonucleoside 5'-triphosphate = RNA(n+1) + diphosphate. Its function is as follows. DNA-dependent RNA polymerase catalyzes the transcription of DNA into RNA using the four ribonucleoside triphosphates as substrates. The chain is DNA-directed RNA polymerase subunit beta from Aquifex aeolicus (strain VF5).